Consider the following 662-residue polypeptide: uncharacterized protein (662 aa).

Transmembrane regions (helical) follow at residues 10 to 30 (SSIV…GWPV), 46 to 66 (PVIG…FLPI), 68 to 88 (AINL…LSKG), 101 to 121 (GFCW…EIIP), 167 to 187 (LIYY…TGAT), 193 to 213 (IALT…LAVA), 217 to 237 (SAYA…KPAV), 263 to 283 (PWVP…MAYL), 285 to 305 (ILYS…AILA), 312 to 332 (MWAG…LSVS), 342 to 362 (EVLI…AVLI), 373 to 393 (KVVE…LDIP), 394 to 414 (GFWL…FLIW), 432 to 452 (ALTV…SVIM), 460 to 480 (VLIP…STTI), and 485 to 505 (LVGR…ILVG).

It is found in the cell membrane. This is an uncharacterized protein from Sinorhizobium fredii (strain NBRC 101917 / NGR234).